A 224-amino-acid polypeptide reads, in one-letter code: Ribose-5-phosphate isomerase A 2 (224 aa).

Residues Ser27–Thr30, Asp83–Asp86, and Lys96–Gly99 each bind substrate. The active-site Proton acceptor is Glu105. Lys123 contacts substrate.

The protein belongs to the ribose 5-phosphate isomerase family. As to quaternary structure, homodimer.

The catalysed reaction is aldehydo-D-ribose 5-phosphate = D-ribulose 5-phosphate. It functions in the pathway carbohydrate degradation; pentose phosphate pathway; D-ribose 5-phosphate from D-ribulose 5-phosphate (non-oxidative stage): step 1/1. In terms of biological role, catalyzes the reversible conversion of ribose-5-phosphate to ribulose 5-phosphate. This is Ribose-5-phosphate isomerase A 2 from Oceanobacillus iheyensis (strain DSM 14371 / CIP 107618 / JCM 11309 / KCTC 3954 / HTE831).